A 1011-amino-acid chain; its full sequence is RAS protein activator like-3 (1011 aa).

A disordered region spans residues 1–38 (MDPPSPSRTSQTQPTATSPLTSYRWHTGGGGEKAAGGF). Residues 7 to 22 (SRTSQTQPTATSPLTS) show a composition bias toward low complexity. Residues Ser18 and Ser51 each carry the phosphoserine modification. Disordered regions lie at residues 52-136 (HQEP…PVWD), 151-197 (GGEE…GPNQ), and 209-230 (KEKK…GSRE). A compositionally biased stretch (basic residues) spans 81–95 (SRLRLSKALWGRHKN). The segment covering 100–117 (PDPEPEQEAPELEPEPEL) has biased composition (acidic residues). The span at 118–131 (EPPTPQIPEAPTPN) shows a compositional bias: pro residues. A phosphoserine mark is found at Ser164, Ser166, Ser167, and Ser170. Basic and acidic residues predominate over residues 179–190 (RDPDRMPGKTEP). The PH domain maps to 197 to 293 (QVHNVRGLLK…WIEDLRRQFQ (97 aa)). Phosphoserine occurs at positions 224, 228, and 231. A Phosphothreonine modification is found at Thr234. The 121-residue stretch at 284–404 (WIEDLRRQFQ…APAAGLERWF (121 aa)) folds into the C2 domain. Residues 474 to 682 (GRAQALVTDL…PAMQCFLDQV (209 aa)) form the Ras-GAP domain. Disordered stretches follow at residues 756 to 885 (QVHS…LGTH) and 987 to 1011 (LSPR…GDTT). Phosphoserine is present on residues Ser787 and Ser790. Basic and acidic residues predominate over residues 792-808 (RRSESWARPRPDEERPL). 2 stretches are compositionally biased toward polar residues: residues 871 to 882 (QMDQPQDRNQAL) and 987 to 999 (LSPR…SQPQ). Residues 888-988 (VNKLAELQCE…RDAVQSLQLS (101 aa)) are a coiled coil. At Ser988 the chain carries Phosphoserine.

In terms of tissue distribution, predominantly expressed in cells of hematopoietic lineages.

The protein localises to the cytoplasm. It localises to the cell cortex. Functions as a Ras GTPase-activating protein. Plays an important role in the expansion and functions of natural killer T (NKT) cells in the liver by negatively regulating RAS activity and the down-stream ERK signaling pathway. In Homo sapiens (Human), this protein is RAS protein activator like-3 (RASAL3).